The primary structure comprises 151 residues: Succinate dehydrogenase subunit 4, mitochondrial (151 aa).

The N-terminal 78 residues, 1–78 (MSLRRTILDL…RSISSSIGQS (78 aa)), are a transit peptide targeting the mitochondrion. Residue H109 coordinates heme. An a ubiquinone-binding site is contributed by Y121. A helical transmembrane segment spans residues 130–150 (LIVMSLGLFQIIVLKDIILFL).

As to quaternary structure, component of complex II composed of eight subunits in plants: four classical SDH subunits SDH1, SDH2, SDH3 and SDH4 (a flavoprotein (FP), an iron-sulfur protein (IP), and a cytochrome b composed of a large and a small subunit.), as well as four subunits unknown in mitochondria from bacteria and heterotrophic eukaryotes. Heme is required as a cofactor. In terms of tissue distribution, expressed in flowers, inflorescences and stems.

The protein resides in the mitochondrion inner membrane. Its pathway is carbohydrate metabolism; tricarboxylic acid cycle. Functionally, membrane-anchoring subunit of succinate dehydrogenase (SDH). This is Succinate dehydrogenase subunit 4, mitochondrial from Arabidopsis thaliana (Mouse-ear cress).